The chain runs to 231 residues: 2-C-methyl-D-erythritol 4-phosphate cytidylyltransferase (231 aa).

Belongs to the IspD/TarI cytidylyltransferase family. IspD subfamily.

The catalysed reaction is 2-C-methyl-D-erythritol 4-phosphate + CTP + H(+) = 4-CDP-2-C-methyl-D-erythritol + diphosphate. Its pathway is isoprenoid biosynthesis; isopentenyl diphosphate biosynthesis via DXP pathway; isopentenyl diphosphate from 1-deoxy-D-xylulose 5-phosphate: step 2/6. In terms of biological role, catalyzes the formation of 4-diphosphocytidyl-2-C-methyl-D-erythritol from CTP and 2-C-methyl-D-erythritol 4-phosphate (MEP). The chain is 2-C-methyl-D-erythritol 4-phosphate cytidylyltransferase from Shewanella pealeana (strain ATCC 700345 / ANG-SQ1).